The primary structure comprises 85 residues: Large ribosomal subunit protein bL27 (85 aa).

The segment at 1-20 (MAHKKAGGSTRNGRDSEAKR) is disordered.

It belongs to the bacterial ribosomal protein bL27 family.

This is Large ribosomal subunit protein bL27 from Salmonella agona (strain SL483).